The chain runs to 67 residues: MAKIDDLKAKSDDQLAVELGEMKREQFNLRFQSATGQLEKPARVREVRRTIAQIKTLQAERQRSATK.

It belongs to the universal ribosomal protein uL29 family.

The sequence is that of Large ribosomal subunit protein uL29 from Zymomonas mobilis subsp. mobilis (strain ATCC 31821 / ZM4 / CP4).